Here is a 318-residue protein sequence, read N- to C-terminus: B3 domain-containing protein At1g05930 (318 aa).

Residues 201 to 293 constitute a DNA-binding region (TF-B3); it reads FNRLISNDFL…VLCFAMRQWR (93 aa).

Its subcellular location is the nucleus. The protein is B3 domain-containing protein At1g05930 of Arabidopsis thaliana (Mouse-ear cress).